We begin with the raw amino-acid sequence, 706 residues long: Polyribonucleotide nucleotidyltransferase (706 aa).

Mg(2+)-binding residues include D488 and D494. A KH domain is found at 555 to 614; sequence PRLFTMKINPDKIRDVIGKGGSVIRALTEETGTQINIDEDGTITIASADPAKAEEAKRRI. Positions 624-692 constitute an S1 motif domain; that stretch reads GKIYEGPITK…EKGRIKLSMK (69 aa).

This sequence belongs to the polyribonucleotide nucleotidyltransferase family. It depends on Mg(2+) as a cofactor.

The protein resides in the cytoplasm. It carries out the reaction RNA(n+1) + phosphate = RNA(n) + a ribonucleoside 5'-diphosphate. Functionally, involved in mRNA degradation. Catalyzes the phosphorolysis of single-stranded polyribonucleotides processively in the 3'- to 5'-direction. The protein is Polyribonucleotide nucleotidyltransferase of Albidiferax ferrireducens (strain ATCC BAA-621 / DSM 15236 / T118) (Rhodoferax ferrireducens).